Reading from the N-terminus, the 437-residue chain is Succinate--CoA ligase [ADP-forming] subunit beta, hydrogenosomal (437 aa).

Residues 1-27 (MLANVTRSTSKAAPALASIAQTAQKRF) constitute a hydrogenosome transit peptide. The region spanning 36–278 (MNLLHEYNVN…TTQEDPREVA (243 aa)) is the ATP-grasp domain. ATP is bound by residues Lys73, 80–82 (GRG), and Glu141. Positions 233 and 247 each coordinate Mg(2+). Residues Asn299 and 356–358 (GIM) each bind substrate.

Belongs to the succinate/malate CoA ligase beta subunit family. Heterodimer of an alpha and a beta subunit. Mg(2+) is required as a cofactor.

It is found in the hydrogenosome. The enzyme catalyses succinate + ATP + CoA = succinyl-CoA + ADP + phosphate. It functions in the pathway carbohydrate metabolism; tricarboxylic acid cycle; succinate from succinyl-CoA (ligase route): step 1/1. Succinyl-CoA synthetase functions in the citric acid cycle (TCA), coupling the hydrolysis of succinyl-CoA to the synthesis of ATP and thus represents the only step of substrate-level phosphorylation in the TCA. The beta subunit provides nucleotide specificity of the enzyme and binds the substrate succinate, while the binding sites for coenzyme A and phosphate are found in the alpha subunit. This is Succinate--CoA ligase [ADP-forming] subunit beta, hydrogenosomal from Neocallimastix frontalis (Rumen fungus).